Reading from the N-terminus, the 130-residue chain is Small ribosomal subunit protein uS11c (130 aa).

The protein belongs to the universal ribosomal protein uS11 family. In terms of assembly, part of the 30S ribosomal subunit.

It is found in the plastid. The protein localises to the chloroplast. The sequence is that of Small ribosomal subunit protein uS11c from Zygnema circumcarinatum (Green alga).